Here is a 472-residue protein sequence, read N- to C-terminus: Ribulose bisphosphate carboxylase large chain 1 (472 aa).

Residues N115 and T165 each coordinate substrate. Catalysis depends on K167, which acts as the Proton acceptor. K169 lines the substrate pocket. Residues K193, D195, and E196 each coordinate Mg(2+). Residue K193 is modified to N6-carboxylysine. H286 serves as the catalytic Proton acceptor. Substrate is bound by residues R287, H319, and S371.

It belongs to the RuBisCO large chain family. Type I subfamily. As to quaternary structure, heterohexadecamer of 8 large chains and 8 small chains. The cofactor is Mg(2+).

The catalysed reaction is 2 (2R)-3-phosphoglycerate + 2 H(+) = D-ribulose 1,5-bisphosphate + CO2 + H2O. It catalyses the reaction D-ribulose 1,5-bisphosphate + O2 = 2-phosphoglycolate + (2R)-3-phosphoglycerate + 2 H(+). In terms of biological role, ruBisCO catalyzes two reactions: the carboxylation of D-ribulose 1,5-bisphosphate, the primary event in carbon dioxide fixation, as well as the oxidative fragmentation of the pentose substrate. Both reactions occur simultaneously and in competition at the same active site. This is Ribulose bisphosphate carboxylase large chain 1 from Allochromatium vinosum (strain ATCC 17899 / DSM 180 / NBRC 103801 / NCIMB 10441 / D) (Chromatium vinosum).